A 331-amino-acid polypeptide reads, in one-letter code: Fructose-1,6-bisphosphatase class 1 2 (331 aa).

Residues Glu80, Asp98, Leu100, and Asp101 each coordinate Mg(2+). Substrate contacts are provided by residues 101–104 and Asn189; that span reads DGSS. Glu261 provides a ligand contact to Mg(2+).

This sequence belongs to the FBPase class 1 family. In terms of assembly, homotetramer. Mg(2+) is required as a cofactor.

The protein resides in the cytoplasm. It catalyses the reaction beta-D-fructose 1,6-bisphosphate + H2O = beta-D-fructose 6-phosphate + phosphate. It participates in carbohydrate biosynthesis; Calvin cycle. This chain is Fructose-1,6-bisphosphatase class 1 2, found in Cereibacter sphaeroides (strain ATCC 17023 / DSM 158 / JCM 6121 / CCUG 31486 / LMG 2827 / NBRC 12203 / NCIMB 8253 / ATH 2.4.1.) (Rhodobacter sphaeroides).